The chain runs to 537 residues: Frizzled-4 (537 aa).

A signal peptide spans 1–36; the sequence is MAWPGTGPSSRGAPGGVGLRLGLLLQFLLLLRPTLG. Residues 37–212 lie on the Extracellular side of the membrane; it reads FGDEEERRCD…KCGYDAGLYS (176 aa). Residues 40–161 form the FZ domain; the sequence is EEERRCDPIR…NDHNHMCMEG (122 aa). Intrachain disulfides connect cysteine 45–cysteine 106, cysteine 53–cysteine 99, cysteine 90–cysteine 128, cysteine 117–cysteine 158, cysteine 121–cysteine 145, cysteine 181–cysteine 200, cysteine 204–cysteine 282, and cysteine 302–cysteine 377. N-linked (GlcNAc...) asparagine glycosylation is present at asparagine 59. Residue asparagine 144 is glycosylated (N-linked (GlcNAc...) asparagine). A helical transmembrane segment spans residues 213–243; that stretch reads RSAKEFTDIWMAVWASLCFISTTFTVLTFLI. Topologically, residues 244–249 are cytoplasmic; the sequence is DSSRFS. The chain crosses the membrane as a helical span at residues 250-275; it reads YPERPIIFLSMCYNIYSIAYIVRLTV. Over 276-299 the chain is Extracellular; the sequence is GRERISCDFEEAAEPVLIQEGLKN. Residues 300–333 form a helical membrane-spanning segment; that stretch reads TGCAIIFLLMYFFGMASSIWWVILTLTWFLAAGL. The Cytoplasmic segment spans residues 334-336; sequence KWG. The helical transmembrane segment at 337–365 threads the bilayer; it reads HEAIEMHSSYFHIAAWAIPAVKTIVILIM. Residues 366 to 383 lie on the Extracellular side of the membrane; it reads RLVDADELTGLCYVGNQN. A helical transmembrane segment spans residues 384-410; the sequence is LDALTGFVVAPLFTYLVIGTLFIAAGL. Topologically, residues 411 to 431 are cytoplasmic; sequence VALFKIRSNLQKDGTKTDKLE. Residues 432–460 traverse the membrane as a helical segment; the sequence is RLMVKIGVFSVLYTVPATCVIACYFYEIS. At 461–473 the chain is on the extracellular side; the sequence is NWALFRYSADDSN. A helical transmembrane segment spans residues 474–495; that stretch reads MAVEMLKIFMSLLVGITSGMWI. The Cytoplasmic portion of the chain corresponds to 496–537; sequence WSAKTLHTWQKCSNRLVNSGKVKREKRGNGWVKPGKGNETVV. Positions 499–504 match the Lys-Thr-X-X-X-Trp motif, mediates interaction with the PDZ domain of Dvl family members motif; the sequence is KTLHTW. A PDZ-binding motif is present at residues 535-537; the sequence is TVV.

The protein belongs to the G-protein coupled receptor Fz/Smo family. As to quaternary structure, interacts with MAGI3 and NDP. Component of a complex, at least composed of TSPAN12, FZD4 and norrin (NDP). Interacts (via FZ domain) with TSKU; TSKU competes with WNT2B for binding to FZD4, inhibiting Wnt signaling and repressing peripheral eye development. Interacts with glypican GPC3. In terms of processing, ubiquitinated by ZNRF3, leading to its degradation by the proteasome. In terms of tissue distribution, expressed in chondrocytes.

It localises to the cell membrane. In terms of biological role, receptor for Wnt proteins. Most frizzled receptors are coupled to the beta-catenin (CTNNB1) canonical signaling pathway, which leads to the activation of disheveled proteins, inhibition of GSK-3 kinase, nuclear accumulation of beta-catenin (CTNNB1) and activation of Wnt target genes. Plays a critical role in retinal vascularization by acting as a receptor for Wnt proteins and norrin (NDP). In retina, it can be activated by Wnt protein-binding and also by Wnt-independent signaling via binding of norrin (NDP), promoting in both cases beta-catenin (CTNNB1) accumulation and stimulation of LEF/TCF-mediated transcriptional programs. A second signaling pathway involving PKC and calcium fluxes has been seen for some family members, but it is not yet clear if it represents a distinct pathway or if it can be integrated in the canonical pathway, as PKC seems to be required for Wnt-mediated inactivation of GSK-3 kinase. Both pathways seem to involve interactions with G-proteins. May be involved in transduction and intercellular transmission of polarity information during tissue morphogenesis and/or in differentiated tissues. Activation by Wnt5A stimulates PKC activity via a G-protein-dependent mechanism. The chain is Frizzled-4 (Fzd4) from Mus musculus (Mouse).